Here is a 236-residue protein sequence, read N- to C-terminus: Putative protein ZBED10P (236 aa).

The protein is Putative protein ZBED10P of Homo sapiens (Human).